The sequence spans 533 residues: (E)-beta-farnesene synthase (533 aa).

5 residues coordinate Mg(2+): Asp-286, Asp-290, Asn-430, Ser-434, and Glu-438. A DDXXD motif motif is present at residues 286–290 (DDMMD).

It belongs to the terpene synthase family. Requires Mg(2+) as cofactor. The cofactor is Co(2+). Mn(2+) is required as a cofactor.

It is found in the cytoplasm. It catalyses the reaction (2E,6E)-farnesyl diphosphate = (E)-beta-farnesene + diphosphate. Its pathway is secondary metabolite biosynthesis; terpenoid biosynthesis. Functionally, sesquiterpene cyclase catalyzing the production of sixfold more beta-farnesene than alpha-bergamotene from farnesyl diphosphate. Involved in indirect defense by producing volatile signals attracting natural enemies of herbivores. In Zea diploperennis (Diploperennial teosinte), this protein is (E)-beta-farnesene synthase.